The following is a 571-amino-acid chain: Proline--tRNA ligase (571 aa).

Belongs to the class-II aminoacyl-tRNA synthetase family. ProS type 1 subfamily. In terms of assembly, homodimer.

Its subcellular location is the cytoplasm. The enzyme catalyses tRNA(Pro) + L-proline + ATP = L-prolyl-tRNA(Pro) + AMP + diphosphate. Its function is as follows. Catalyzes the attachment of proline to tRNA(Pro) in a two-step reaction: proline is first activated by ATP to form Pro-AMP and then transferred to the acceptor end of tRNA(Pro). As ProRS can inadvertently accommodate and process non-cognate amino acids such as alanine and cysteine, to avoid such errors it has two additional distinct editing activities against alanine. One activity is designated as 'pretransfer' editing and involves the tRNA(Pro)-independent hydrolysis of activated Ala-AMP. The other activity is designated 'posttransfer' editing and involves deacylation of mischarged Ala-tRNA(Pro). The misacylated Cys-tRNA(Pro) is not edited by ProRS. This is Proline--tRNA ligase from Psychromonas ingrahamii (strain DSM 17664 / CCUG 51855 / 37).